The chain runs to 879 residues: Phosphoenolpyruvate carboxylase (879 aa).

Residues His-138 and Lys-545 contribute to the active site.

Belongs to the PEPCase type 1 family. The cofactor is Mg(2+).

It catalyses the reaction oxaloacetate + phosphate = phosphoenolpyruvate + hydrogencarbonate. Forms oxaloacetate, a four-carbon dicarboxylic acid source for the tricarboxylic acid cycle. This is Phosphoenolpyruvate carboxylase from Histophilus somni (strain 2336) (Haemophilus somnus).